The following is a 332-amino-acid chain: mRNA-decapping enzyme 1 (332 aa).

Residues 141-173 are compositionally biased toward low complexity; sequence ARAAKAASEAPQASVPAPTQAPAAPAQAPQMAP. The tract at residues 141-175 is disordered; the sequence is ARAAKAASEAPQASVPAPTQAPAAPAQAPQMAPQA.

The protein belongs to the DCP1 family. May be a component of the decapping complex composed of dcap-1 and dcap-2. Expressed in neurons including touch receptor neurons and motor neurons.

The protein resides in the cytoplasm. It localises to the cytoplasmic granule. Its function is as follows. Component of the decapping complex necessary for the degradation of mRNAs, both in normal mRNA turnover and in nonsense-mediated mRNA decay. In contrast to orthologs, does not possess decapping activity and does not remove the 7-methyl guanine cap structure from mRNA molecules. In the nervous system, negatively regulates the expression of insulin-like peptide ins-7, which in turn promotes longevity. This may in part be through promoting the activity of daf-16 in distal tissues. Required for the developmental axon guidance and regrowth of PLM touch receptor neurons. In ADL sensory neurons, plays a role in ciliary shape formation. Acts in neurons to promote larval survival at high temperatures by negatively regulating lin-14 expression. The chain is mRNA-decapping enzyme 1 from Caenorhabditis elegans.